Consider the following 250-residue polypeptide: 2,3-bisphosphoglycerate-dependent phosphoglycerate mutase (250 aa).

Substrate-binding positions include 10–17 (RHGESQWN), 23–24 (TG), Arg62, 89–92 (ERHY), Lys100, 116–117 (RR), and 185–186 (GN). The active-site Tele-phosphohistidine intermediate is His11. Catalysis depends on Glu89, which acts as the Proton donor/acceptor.

It belongs to the phosphoglycerate mutase family. BPG-dependent PGAM subfamily. Homodimer.

It carries out the reaction (2R)-2-phosphoglycerate = (2R)-3-phosphoglycerate. It functions in the pathway carbohydrate degradation; glycolysis; pyruvate from D-glyceraldehyde 3-phosphate: step 3/5. Catalyzes the interconversion of 2-phosphoglycerate and 3-phosphoglycerate. This is 2,3-bisphosphoglycerate-dependent phosphoglycerate mutase from Salmonella agona (strain SL483).